Reading from the N-terminus, the 88-residue chain is Small ribosomal subunit protein bS16c (88 aa).

The protein belongs to the bacterial ribosomal protein bS16 family.

The protein resides in the plastid. Its subcellular location is the chloroplast. In Gossypium barbadense (Sea Island cotton), this protein is Small ribosomal subunit protein bS16c.